A 547-amino-acid polypeptide reads, in one-letter code: Membrane protein insertase YidC (547 aa).

6 helical membrane-spanning segments follow: residues L6–Y26, V328–I348, L351–F371, L425–V445, L459–Q479, and P499–V519.

The protein belongs to the OXA1/ALB3/YidC family. Type 1 subfamily. Interacts with the Sec translocase complex via SecD. Specifically interacts with transmembrane segments of nascent integral membrane proteins during membrane integration.

Its subcellular location is the cell inner membrane. In terms of biological role, required for the insertion and/or proper folding and/or complex formation of integral membrane proteins into the membrane. Involved in integration of membrane proteins that insert both dependently and independently of the Sec translocase complex, as well as at least some lipoproteins. Aids folding of multispanning membrane proteins. The protein is Membrane protein insertase YidC of Dechloromonas aromatica (strain RCB).